The chain runs to 366 residues: MNKVILYCRPGFEKECAAEITEKATQHNAFGFARVKENSGYVVFECYQHEDAERLVKTLPFHELIFVRQMFVSGDLLRDLPPEDRITPIVGMLTGAIERAGDLRVEVPDTNESKELMKFCRKFTVPLRAALREHKILLGHEKADRPVLHVLFIAPGCCYVGYSYSNNNSPFYMGIPRLKFPSDAPSRSTLKLEEAFHVFVPADEWDERLGSGMYAVDLGACPGGWTYQLVKRSMMVYAVDNGPMAPSLMDTGQVMHHQADGFRFEPPRNNVYWLVCDMVEKPAKVTSLMSDWLIKGWCRETIFNLKLPMKKRYEEVSQNLALLRERLSENGIHAEVHAKHLYHDREEVTVHVRRFWSAVPGRRDER.

S-adenosyl-L-methionine-binding positions include Ser-188, 221–224, Asp-240, Asp-260, and Asp-277; that span reads CPGG. The Proton acceptor role is filled by Lys-306.

It belongs to the class I-like SAM-binding methyltransferase superfamily. RNA methyltransferase RlmE family. RlmM subfamily. Monomer.

It localises to the cytoplasm. The enzyme catalyses cytidine(2498) in 23S rRNA + S-adenosyl-L-methionine = 2'-O-methylcytidine(2498) in 23S rRNA + S-adenosyl-L-homocysteine + H(+). Its function is as follows. Catalyzes the 2'-O-methylation at nucleotide C2498 in 23S rRNA. The polypeptide is Ribosomal RNA large subunit methyltransferase M (Pectobacterium atrosepticum (strain SCRI 1043 / ATCC BAA-672) (Erwinia carotovora subsp. atroseptica)).